Reading from the N-terminus, the 222-residue chain is MKLSTVLCCYLLLLGLFAPEIISDSPPLQDVCPMAPQGERKLFMNGFFCKSPSTIMASDFKTLLLNHAGDLDNMVRSSANIITATEFPGLNTLGISMARTDIAVSGAVLPHSHPRASEMMFVHSGSVVAGFFDTKGKLFQKTLAEGDVFIFPRGLVHFIMNYGFGLATTFSVLNSQNPGVVGITHAMFAPDSEVAEGLMARMLSFRDMGMDDSSSVDSPWFY.

Residues 1-23 form the signal peptide; the sequence is MKLSTVLCCYLLLLGLFAPEIIS. C32 and C49 are disulfide-bonded. Residues 72-195 enclose the Cupin type-1 domain; it reads DNMVRSSANI…AMFAPDSEVA (124 aa). Mn(2+)-binding residues include H111, H113, E118, and H157.

The protein belongs to the germin family. As to quaternary structure, oligomer (believed to be a pentamer but probably hexamer).

The protein resides in the secreted. The protein localises to the extracellular space. It is found in the apoplast. May play a role in plant defense. Probably has no oxalate oxidase activity even if the active site is conserved. The protein is Germin-like protein 11-1 of Oryza sativa subsp. japonica (Rice).